Consider the following 219-residue polypeptide: Small ribosomal subunit protein uS3 (219 aa).

The KH type-2 domain occupies 41–110 (IRKIINTEYS…DVSINICEVK (70 aa)).

It belongs to the universal ribosomal protein uS3 family. As to quaternary structure, part of the 30S ribosomal subunit. Forms a tight complex with proteins S10 and S14.

Binds the lower part of the 30S subunit head. Binds mRNA in the 70S ribosome, positioning it for translation. This chain is Small ribosomal subunit protein uS3, found in Orientia tsutsugamushi (strain Ikeda) (Rickettsia tsutsugamushi).